A 218-amino-acid polypeptide reads, in one-letter code: Thiopurine S-methyltransferase (218 aa).

4 residues coordinate S-adenosyl-L-methionine: W10, L45, E66, and R123.

It belongs to the class I-like SAM-binding methyltransferase superfamily. TPMT family.

The protein resides in the cytoplasm. It carries out the reaction S-adenosyl-L-methionine + a thiopurine = S-adenosyl-L-homocysteine + a thiopurine S-methylether.. This Shewanella baltica (strain OS223) protein is Thiopurine S-methyltransferase.